Here is a 474-residue protein sequence, read N- to C-terminus: PRAME family member 14 (474 aa).

LRR repeat units lie at residues 15–38 (QSLL…LYLP), 204–229 (LNSI…CYLK), 271–294 (LLKI…LQNP), 319–342 (LGYL…PLGA), and 391–414 (MGAL…TYPA).

It belongs to the PRAME family.

The chain is PRAME family member 14 from Homo sapiens (Human).